Here is a 477-residue protein sequence, read N- to C-terminus: TNF receptor-associated factor family protein DDB_G0278133 (477 aa).

The segment at 45–88 adopts an RING-type; degenerate zinc-finger fold; sequence CDICTLELFIESEPKALQCKEGHLACRRCWERYLSTNKQCMTCK. TRAF-type zinc fingers lie at residues 160–211 and 212–267; these read NHYK…SSLS and DHHK…SKMQ. Residues 271-326 are a coiled coil; sequence LEHSVTKLMNQNEIIKKDNQNLDQEKKIEEIKLKLNNLLNNYIQLKNEIAVLKQNS. The 133-residue stretch at 331 to 463 folds into the MATH domain; it reads VYSNKWIIPE…FLNEKGELEI (133 aa).

Belongs to the TNF receptor-associated factor family. A subfamily.

It localises to the cytoplasm. Functionally, probable adapter protein and signal transducer that links members of the tumor necrosis factor receptor family to different signaling pathways by association with the receptor cytoplasmic domain and kinases. This is TNF receptor-associated factor family protein DDB_G0278133 from Dictyostelium discoideum (Social amoeba).